The sequence spans 1430 residues: Gag-Pol polyprotein (1430 aa).

A lipid anchor (N-myristoyl glycine; by host) is attached at G2. The interval 7 to 31 (VLSGGKLDAWEKIRLRPGGKKKYKL) is interaction with Gp41. Positions 8–43 (LSGGKLDAWEKIRLRPGGKKKYKLKHLVWASRELER) are interaction with host CALM1. The tract at residues 12–19 (KLDAWEKI) is interaction with host AP3D1. Positions 14–33 (DAWEKIRLRPGGKKKYKLKH) are interaction with membrane phosphatidylinositol 4,5-bisphosphate and RNA. A Nuclear export signal motif is present at residues 16-22 (WEKIRLR). Positions 26-32 (KKKYKLK) match the Nuclear localization signal motif. Residues 73–77 (EEIKS) form an interaction with membrane phosphatidylinositol 4,5-bisphosphate region. Position 128 is a phosphotyrosine; by host (Y128). The interaction with human PPIA/CYPA and NUP153 stretch occupies residues 185 to 223 (NTVGGHQAAMQMLKDTINDEAAEWDRLHPVHAGPIPPGQ). A dimerization/Multimerization of capsid protein p24 region spans residues 273 to 359 (YSPVSILDIR…GGPSHKARIL (87 aa)). CCHC-type zinc fingers lie at residues 385 to 402 (VKCFNCGKEGHIARNCRA) and 406 to 423 (KGCWKCGKEGHQMKDCTE). The tract at residues 439 to 480 (EAREFSSEQTRANSPTSRELRVRGGDNPLSEAGDQRQGTEPS) is disordered. Positions 445 to 455 (SEQTRANSPTS) are enriched in polar residues. The dimerization of protease stretch occupies residues 484–488 (PQITL). One can recognise a Peptidase A2 domain in the interval 503-572 (REALLDTGAD…TPVNIIGRNL (70 aa)). D508 serves as the catalytic For protease activity; shared with dimeric partner. Dimerization of protease stretches follow at residues 532 to 538 (GIGGFIK) and 571 to 583 (NLLTQIGCTLNFP). Residues 626-816 (EGKISKIGPE…PPFLWMGYEL (191 aa)) enclose the Reverse transcriptase domain. Positions 692, 767, and 768 each coordinate Mg(2+). The tract at residues 809–817 (FLWMGYELH) is RT 'primer grip'. The Tryptophan repeat motif motif lies at 980–996 (WETWWTEYWQATWIPEW). The RNase H type-1 domain maps to 1016 to 1139 (IVGAETFYVD…VDKLVSAGIR (124 aa)). Mg(2+) contacts are provided by D1025, E1060, D1080, and D1131. The segment at 1145–1186 (DGIDKAQEEHEKYHNNWRAMASDFNLPPIVAKEIVASCDKCQ) adopts an Integrase-type zinc-finger fold. Residues H1154, H1158, C1182, and C1185 each coordinate Zn(2+). Residues 1196 to 1346 (VDCSPGIWQL…SAGERIVDII (151 aa)) enclose the Integrase catalytic domain. Mg(2+) is bound by residues D1206, D1258, and E1294. A DNA-binding region (integrase-type) is located at residues 1365–1412 (FRVYYRDSREPIWKGPAKLLWKGEGAVVIQDNSEIKVVPRRKAKIIRD).

Homotrimer; further assembles as hexamers of trimers. Interacts with gp41 (via C-terminus). Interacts with host CALM1; this interaction induces a conformational change in the Matrix protein, triggering exposure of the myristate group. Interacts with host AP3D1; this interaction allows the polyprotein trafficking to multivesicular bodies during virus assembly. Part of the pre-integration complex (PIC) which is composed of viral genome, matrix protein, Vpr and integrase. As to quaternary structure, homodimer; the homodimer further multimerizes as homohexamers or homopentamers. Interacts with human PPIA/CYPA; This interaction stabilizes the capsid. Interacts with human NUP153. Interacts with host PDZD8; this interaction stabilizes the capsid. Interacts with monkey TRIM5; this interaction destabilizes the capsid. In terms of assembly, homodimer, whose active site consists of two apposed aspartic acid residues. Heterodimer of p66 RT and p51 RT (RT p66/p51). Heterodimerization of RT is essential for DNA polymerase activity. The overall folding of the subdomains is similar in p66 RT and p51 RT but the spatial arrangements of the subdomains are dramatically different. As to quaternary structure, homotetramer; may further associate as a homohexadecamer. Part of the pre-integration complex (PIC) which is composed of viral genome, matrix protein, Vpr and integrase. Interacts with human SMARCB1/INI1 and human PSIP1/LEDGF isoform 1. Interacts with human KPNA3; this interaction might play a role in nuclear import of the pre-integration complex. Interacts with human NUP153; this interaction might play a role in nuclear import of the pre-integration complex. Requires Mg(2+) as cofactor. Specific enzymatic cleavages by the viral protease yield mature proteins. The protease is released by autocatalytic cleavage. The polyprotein is cleaved during and after budding, this process is termed maturation. Proteolytic cleavage of p66 RT removes the RNase H domain to yield the p51 RT subunit. Nucleocapsid protein p7 might be further cleaved after virus entry. In terms of processing, tyrosine phosphorylated presumably in the virion by a host kinase. Phosphorylation is apparently not a major regulator of membrane association. Post-translationally, phosphorylated possibly by host MAPK1; this phosphorylation is necessary for Pin1-mediated virion uncoating. Methylated by host PRMT6, impairing its function by reducing RNA annealing and the initiation of reverse transcription.

Its subcellular location is the host cell membrane. The protein resides in the host endosome. It is found in the host multivesicular body. The protein localises to the virion membrane. It localises to the host nucleus. Its subcellular location is the host cytoplasm. The protein resides in the virion. It catalyses the reaction Specific for a P1 residue that is hydrophobic, and P1' variable, but often Pro.. It carries out the reaction Endohydrolysis of RNA in RNA/DNA hybrids. Three different cleavage modes: 1. sequence-specific internal cleavage of RNA. Human immunodeficiency virus type 1 and Moloney murine leukemia virus enzymes prefer to cleave the RNA strand one nucleotide away from the RNA-DNA junction. 2. RNA 5'-end directed cleavage 13-19 nucleotides from the RNA end. 3. DNA 3'-end directed cleavage 15-20 nucleotides away from the primer terminus.. The catalysed reaction is 3'-end directed exonucleolytic cleavage of viral RNA-DNA hybrid.. The enzyme catalyses DNA(n) + a 2'-deoxyribonucleoside 5'-triphosphate = DNA(n+1) + diphosphate. With respect to regulation, protease: The viral protease is inhibited by many synthetic protease inhibitors (PIs), such as amprenavir, atazanavir, indinavir, loprinavir, nelfinavir, ritonavir and saquinavir. Use of protease inhibitors in tritherapy regimens permit more ambitious therapeutic strategies. Reverse transcriptase/ribonuclease H: RT can be inhibited either by nucleoside RT inhibitors (NRTIs) or by non nucleoside RT inhibitors (NNRTIs). NRTIs act as chain terminators, whereas NNRTIs inhibit DNA polymerization by binding a small hydrophobic pocket near the RT active site and inducing an allosteric change in this region. Classical NRTIs are abacavir, adefovir (PMEA), didanosine (ddI), lamivudine (3TC), stavudine (d4T), tenofovir (PMPA), zalcitabine (ddC), and zidovudine (AZT). Classical NNRTIs are atevirdine (BHAP U-87201E), delavirdine, efavirenz (DMP-266), emivirine (I-EBU), and nevirapine (BI-RG-587). The tritherapies used as a basic effective treatment of AIDS associate two NRTIs and one NNRTI. Mediates, with Gag polyprotein, the essential events in virion assembly, including binding the plasma membrane, making the protein-protein interactions necessary to create spherical particles, recruiting the viral Env proteins, and packaging the genomic RNA via direct interactions with the RNA packaging sequence (Psi). Gag-Pol polyprotein may regulate its own translation, by the binding genomic RNA in the 5'-UTR. At low concentration, the polyprotein would promote translation, whereas at high concentration, the polyprotein would encapsidate genomic RNA and then shut off translation. Functionally, targets the polyprotein to the plasma membrane via a multipartite membrane-binding signal, that includes its myristoylated N-terminus. Matrix protein is part of the pre-integration complex. Implicated in the release from host cell mediated by Vpu. Binds to RNA. In terms of biological role, forms the conical core that encapsulates the genomic RNA-nucleocapsid complex in the virion. Most core are conical, with only 7% tubular. The core is constituted by capsid protein hexamer subunits. The core is disassembled soon after virion entry. Host restriction factors such as TRIM5-alpha or TRIMCyp bind retroviral capsids and cause premature capsid disassembly, leading to blocks in reverse transcription. Capsid restriction by TRIM5 is one of the factors which restricts HIV-1 to the human species. Host PIN1 apparently facilitates the virion uncoating. On the other hand, interactions with PDZD8 or CYPA stabilize the capsid. Its function is as follows. Encapsulates and protects viral dimeric unspliced genomic RNA (gRNA). Binds these RNAs through its zinc fingers. Acts as a nucleic acid chaperone which is involved in rearangement of nucleic acid secondary structure during gRNA retrotranscription. Also facilitates template switch leading to recombination. As part of the polyprotein, participates in gRNA dimerization, packaging, tRNA incorporation and virion assembly. Aspartyl protease that mediates proteolytic cleavages of Gag and Gag-Pol polyproteins during or shortly after the release of the virion from the plasma membrane. Cleavages take place as an ordered, step-wise cascade to yield mature proteins. This process is called maturation. Displays maximal activity during the budding process just prior to particle release from the cell. Also cleaves Nef and Vif, probably concomitantly with viral structural proteins on maturation of virus particles. Hydrolyzes host EIF4GI and PABP1 in order to shut off the capped cellular mRNA translation. The resulting inhibition of cellular protein synthesis serves to ensure maximal viral gene expression and to evade host immune response. Also mediates cleavage of host YTHDF3. Mediates cleavage of host CARD8, thereby activating the CARD8 inflammasome, leading to the clearance of latent HIV-1 in patient CD4(+) T-cells after viral reactivation; in contrast, HIV-1 can evade CARD8-sensing when its protease remains inactive in infected cells prior to viral budding. Functionally, multifunctional enzyme that converts the viral RNA genome into dsDNA in the cytoplasm, shortly after virus entry into the cell. This enzyme displays a DNA polymerase activity that can copy either DNA or RNA templates, and a ribonuclease H (RNase H) activity that cleaves the RNA strand of RNA-DNA heteroduplexes in a partially processive 3' to 5' endonucleasic mode. Conversion of viral genomic RNA into dsDNA requires many steps. A tRNA(3)-Lys binds to the primer-binding site (PBS) situated at the 5'-end of the viral RNA. RT uses the 3' end of the tRNA primer to perform a short round of RNA-dependent minus-strand DNA synthesis. The reading proceeds through the U5 region and ends after the repeated (R) region which is present at both ends of viral RNA. The portion of the RNA-DNA heteroduplex is digested by the RNase H, resulting in a ssDNA product attached to the tRNA primer. This ssDNA/tRNA hybridizes with the identical R region situated at the 3' end of viral RNA. This template exchange, known as minus-strand DNA strong stop transfer, can be either intra- or intermolecular. RT uses the 3' end of this newly synthesized short ssDNA to perform the RNA-dependent minus-strand DNA synthesis of the whole template. RNase H digests the RNA template except for two polypurine tracts (PPTs) situated at the 5'-end and near the center of the genome. It is not clear if both polymerase and RNase H activities are simultaneous. RNase H probably can proceed both in a polymerase-dependent (RNA cut into small fragments by the same RT performing DNA synthesis) and a polymerase-independent mode (cleavage of remaining RNA fragments by free RTs). Secondly, RT performs DNA-directed plus-strand DNA synthesis using the PPTs that have not been removed by RNase H as primers. PPTs and tRNA primers are then removed by RNase H. The 3' and 5' ssDNA PBS regions hybridize to form a circular dsDNA intermediate. Strand displacement synthesis by RT to the PBS and PPT ends produces a blunt ended, linear dsDNA copy of the viral genome that includes long terminal repeats (LTRs) at both ends. In terms of biological role, catalyzes viral DNA integration into the host chromosome, by performing a series of DNA cutting and joining reactions. This enzyme activity takes place after virion entry into a cell and reverse transcription of the RNA genome in dsDNA. The first step in the integration process is 3' processing. This step requires a complex comprising the viral genome, matrix protein, Vpr and integrase. This complex is called the pre-integration complex (PIC). The integrase protein removes 2 nucleotides from each 3' end of the viral DNA, leaving recessed CA OH's at the 3' ends. In the second step, the PIC enters cell nucleus. This process is mediated through integrase and Vpr proteins, and allows the virus to infect a non dividing cell. This ability to enter the nucleus is specific of lentiviruses, other retroviruses cannot and rely on cell division to access cell chromosomes. In the third step, termed strand transfer, the integrase protein joins the previously processed 3' ends to the 5' ends of strands of target cellular DNA at the site of integration. The 5'-ends are produced by integrase-catalyzed staggered cuts, 5 bp apart. A Y-shaped, gapped, recombination intermediate results, with the 5'-ends of the viral DNA strands and the 3' ends of target DNA strands remaining unjoined, flanking a gap of 5 bp. The last step is viral DNA integration into host chromosome. This involves host DNA repair synthesis in which the 5 bp gaps between the unjoined strands are filled in and then ligated. Since this process occurs at both cuts flanking the HIV genome, a 5 bp duplication of host DNA is produced at the ends of HIV-1 integration. Alternatively, Integrase may catalyze the excision of viral DNA just after strand transfer, this is termed disintegration. This is Gag-Pol polyprotein (gag-pol) from Homo sapiens (Human).